Consider the following 233-residue polypeptide: 2,3-bisphosphoglycerate-dependent phosphoglycerate mutase (233 aa).

Substrate is bound by residues 8–15 (RHGQSLWN), 21–22 (TG), Arg60, 116–119 (ERYY), Lys127, 143–144 (RR), and 187–188 (GN). The active-site Tele-phosphohistidine intermediate is His9. Residue Glu116 is the Proton donor/acceptor of the active site.

The protein belongs to the phosphoglycerate mutase family. BPG-dependent PGAM subfamily.

It carries out the reaction (2R)-2-phosphoglycerate = (2R)-3-phosphoglycerate. It participates in carbohydrate degradation; glycolysis; pyruvate from D-glyceraldehyde 3-phosphate: step 3/5. Its function is as follows. Catalyzes the interconversion of 2-phosphoglycerate and 3-phosphoglycerate. This Gloeothece citriformis (strain PCC 7424) (Cyanothece sp. (strain PCC 7424)) protein is 2,3-bisphosphoglycerate-dependent phosphoglycerate mutase.